The chain runs to 244 residues: MELFLAGRRVLVTGAGKGIGRGTVQALHATGARVVAVSRTQADLDSLVRECPGIEPVCVDLGDWEATERALGSVGPVDLLVNNAAVALLQPFLEVTKEAFDRSFEVNLRAVIQVSQIVARGLIARGVPGAIVNVSSQCSQRAVTNHSVYCSTKGALDMLTKVMALELGPHKIRVNAVNPTVVMTSMGQATWSDPHKAKTMLNRIPLGKFAEVEHVVNAILFLLSDRSGMTTGSTLPVEGGFWAC.

An N-acetylmethionine modification is found at M1. 11–40 (LVTGAGKGIGRGTVQALHATGARVVAVSRT) contacts NADP(+). R21 carries the post-translational modification Omega-N-methylarginine. The residue at position 46 (S46) is a Phosphoserine. Residue S136 coordinates substrate. The active-site Proton acceptor is Y149. Residue K153 coordinates NADP(+).

Belongs to the short-chain dehydrogenases/reductases (SDR) family. In terms of assembly, homotetramer. As to expression, highly expressed in kidney, liver and epididymis. In the epididymis, it is mainly expressed in the proximal and distal sections of the corpus region. Weakly or not expressed in brain, lung, heart, spleen and testis.

It localises to the membrane. The enzyme catalyses xylitol + NADP(+) = L-xylulose + NADPH + H(+). In terms of biological role, catalyzes the NADPH-dependent reduction of several pentoses, tetroses, trioses, alpha-dicarbonyl compounds and L-xylulose. Participates in the uronate cycle of glucose metabolism. May play a role in the water absorption and cellular osmoregulation in the proximal renal tubules by producing xylitol, an osmolyte, thereby preventing osmolytic stress from occurring in the renal tubules. The polypeptide is L-xylulose reductase (DCXR) (Homo sapiens (Human)).